We begin with the raw amino-acid sequence, 100 residues long: Signal recognition particle 19 kDa protein (100 aa).

This sequence belongs to the SRP19 family. As to quaternary structure, part of the signal recognition particle protein translocation system, which is composed of SRP and FtsY. Archaeal SRP consists of a 7S RNA molecule of 300 nucleotides and two protein subunits: SRP54 and SRP19.

It is found in the cytoplasm. Involved in targeting and insertion of nascent membrane proteins into the cytoplasmic membrane. Binds directly to 7S RNA and mediates binding of the 54 kDa subunit of the SRP. The protein is Signal recognition particle 19 kDa protein of Pyrococcus furiosus (strain ATCC 43587 / DSM 3638 / JCM 8422 / Vc1).